Here is a 709-residue protein sequence, read N- to C-terminus: Fatty acid oxidation complex subunit alpha (709 aa).

The tract at residues 1 to 188 (MEKTFNLTRR…KMGLVNDVVP (188 aa)) is enoyl-CoA hydratase. The 3-hydroxyacyl-CoA dehydrogenase stretch occupies residues 308-709 (RKVKKAVILG…EMAAEKTRFF (402 aa)).

This sequence in the N-terminal section; belongs to the enoyl-CoA hydratase/isomerase family. In the central section; belongs to the 3-hydroxyacyl-CoA dehydrogenase family. Heterotetramer of two alpha chains (FadJ) and two beta chains (FadI).

The protein localises to the cytoplasm. It carries out the reaction a (3S)-3-hydroxyacyl-CoA = a (2E)-enoyl-CoA + H2O. The enzyme catalyses a 4-saturated-(3S)-3-hydroxyacyl-CoA = a (3E)-enoyl-CoA + H2O. The catalysed reaction is a (3S)-3-hydroxyacyl-CoA + NAD(+) = a 3-oxoacyl-CoA + NADH + H(+). It catalyses the reaction (3S)-3-hydroxybutanoyl-CoA = (3R)-3-hydroxybutanoyl-CoA. The protein operates within lipid metabolism; fatty acid beta-oxidation. Catalyzes the formation of a hydroxyacyl-CoA by addition of water on enoyl-CoA. Also exhibits 3-hydroxyacyl-CoA epimerase and 3-hydroxyacyl-CoA dehydrogenase activities. In Shewanella sp. (strain MR-7), this protein is Fatty acid oxidation complex subunit alpha.